The following is a 498-amino-acid chain: Pentatricopeptide repeat-containing protein At2g15980 (498 aa).

PPR repeat units lie at residues 244–274 (NATT…MEEE), 280–314 (NVYS…GVVY), 315–349 (DIVA…GIEC), 350–384 (TCLT…GFEA), 385–423 (DGLT…MFYP), 424–458 (SRNC…GFKP), and 459–489 (SQET…MAES).

Belongs to the PPR family. P subfamily.

The protein is Pentatricopeptide repeat-containing protein At2g15980 of Arabidopsis thaliana (Mouse-ear cress).